A 247-amino-acid polypeptide reads, in one-letter code: MTEHPRLAKAWCAKVITLFPETFPGVLGASLTGKALQKGLWALEPIDLRTFGTGKHRQVDDTPAGGGAGLVLKPDVMARALDIAARGTPADRADWPIVYLSPRGKPFEQRDAERFASAKGITLVCGRFEGVDQRVIDAYGMEEICVGDAVLTGGEIAAQLVLDATTRLIPGVLGNADSTQEESFSDGLLEHPQYTKPADWRGHTIPPVLLSGDHGKVAEWRKAQAEALTQERRPDLWVKVAKPKKPR.

Residue Gly126 coordinates S-adenosyl-L-methionine.

It belongs to the RNA methyltransferase TrmD family. As to quaternary structure, homodimer.

Its subcellular location is the cytoplasm. It catalyses the reaction guanosine(37) in tRNA + S-adenosyl-L-methionine = N(1)-methylguanosine(37) in tRNA + S-adenosyl-L-homocysteine + H(+). Functionally, specifically methylates guanosine-37 in various tRNAs. This Jannaschia sp. (strain CCS1) protein is tRNA (guanine-N(1)-)-methyltransferase.